The primary structure comprises 141 residues: Hemoglobin subunit alpha (141 aa).

The Globin domain maps to 1–141 (VLSANDKTNV…VSTVLTSKYR (141 aa)). A Phosphoserine modification is found at S3. At K7 the chain carries N6-succinyllysine. At T8 the chain carries Phosphothreonine. The residue at position 11 (K11) is an N6-succinyllysine. K16 carries the post-translational modification N6-acetyllysine; alternate. The residue at position 16 (K16) is an N6-succinyllysine; alternate. The residue at position 24 (Y24) is a Phosphotyrosine. S35 bears the Phosphoserine mark. N6-succinyllysine is present on K40. The residue at position 49 (S49) is a Phosphoserine. O2 is bound at residue Q58. A heme b-binding site is contributed by H87. T108 is modified (phosphothreonine). A phosphoserine mark is found at S124 and S131. Residues T134 and T137 each carry the phosphothreonine modification. Phosphoserine is present on S138.

Belongs to the globin family. In terms of assembly, heterotetramer of two alpha chains and two beta chains. Red blood cells.

Involved in oxygen transport from the lung to the various peripheral tissues. Functionally, hemopressin acts as an antagonist peptide of the cannabinoid receptor CNR1. Hemopressin-binding efficiently blocks cannabinoid receptor CNR1 and subsequent signaling. This Didelphis virginiana (North American opossum) protein is Hemoglobin subunit alpha (HBA).